The primary structure comprises 479 residues: Poly(A) polymerase catalytic subunit (479 aa).

Residues D202 and D204 contribute to the active site. Ca(2+) contacts are provided by D202, D204, and D253.

This sequence belongs to the poxviridae poly(A) polymerase catalytic subunit family. In terms of assembly, heterodimer of a large (catalytic) subunit and a small (regulatory) subunit.

The catalysed reaction is RNA(n) + ATP = RNA(n)-3'-adenine ribonucleotide + diphosphate. Its function is as follows. Polymerase that creates the 3'-poly(A) tail of mRNA's. The sequence is that of Poly(A) polymerase catalytic subunit (OPG063) from Mus musculus (Mouse).